The chain runs to 268 residues: Elongation factor Ts (268 aa).

The segment at 81-84 (TDFV) is involved in Mg(2+) ion dislocation from EF-Tu.

The protein belongs to the EF-Ts family.

The protein localises to the cytoplasm. Functionally, associates with the EF-Tu.GDP complex and induces the exchange of GDP to GTP. It remains bound to the aminoacyl-tRNA.EF-Tu.GTP complex up to the GTP hydrolysis stage on the ribosome. In Buchnera aphidicola subsp. Acyrthosiphon pisum (strain 5A), this protein is Elongation factor Ts.